The primary structure comprises 1363 residues: Vascular endothelial growth factor receptor 3 (1363 aa).

Positions 1 to 24 (MQRGAALCLRLWLCLGLLDGLVSG) are cleaved as a signal peptide. Residues 25–775 (YSMTPPTLNI…EGSEDKGSME (751 aa)) lie on the Extracellular side of the membrane. 7 consecutive Ig-like C2-type domains span residues 30 to 127 (PTLN…TAAS), 151 to 213 (KDAM…WGDQ), 219 to 326 (PFLV…TEVI), 331 to 415 (PFIS…ISLE), 422 to 552 (PQIH…FYVT), 555 to 671 (PDGF…KYLS), and 678 to 764 (PRLT…ASVA). Asparagine 33, asparagine 104, asparagine 166, asparagine 251, asparagine 299, and asparagine 411 each carry an N-linked (GlcNAc...) asparagine glycan. Intrachain disulfides connect cysteine 51-cysteine 111 and cysteine 158-cysteine 206. A disulfide bridge links cysteine 252 with cysteine 310. Disulfide bonds link cysteine 445-cysteine 534, cysteine 466-cysteine 486, and cysteine 578-cysteine 653. Asparagine 515, asparagine 527, asparagine 594, asparagine 683, and asparagine 690 each carry an N-linked (GlcNAc...) asparagine glycan. A disulfide bond links cysteine 699 and cysteine 751. A glycan (N-linked (GlcNAc...) asparagine) is linked at asparagine 758. A helical transmembrane segment spans residues 776 to 796 (IVILVGTGVIAVFFWVLLLLI). The Cytoplasmic segment spans residues 797–1363 (FCNMRRPAHA…RVTFFTDNSY (567 aa)). Residues tyrosine 830, tyrosine 833, and tyrosine 853 each carry the phosphotyrosine; by SRC modification. The Protein kinase domain occupies 845–1173 (LHLGRVLGYG…ELVEILGDLL (329 aa)). ATP-binding positions include 851 to 859 (LGYGAFGKV) and lysine 879. Aspartate 1037 functions as the Proton acceptor in the catalytic mechanism. Tyrosine 1063 is modified (phosphotyrosine; by autocatalysis and SRC). Residues tyrosine 1068, tyrosine 1230, tyrosine 1231, and tyrosine 1265 each carry the phosphotyrosine; by autocatalysis modification. The interval 1291-1331 (HRQESGFSCKGPGQNVAVTRAHPDSQGRRRRPERGARGGQV) is disordered. Phosphotyrosine; by autocatalysis and SRC is present on residues tyrosine 1333 and tyrosine 1337. Tyrosine 1363 is modified (phosphotyrosine; by autocatalysis).

Belongs to the protein kinase superfamily. Tyr protein kinase family. CSF-1/PDGF receptor subfamily. As to quaternary structure, interacts with VEGFC and VEGFD. Monomer in the absence of bound VEGFC or VEGFD. Homodimer in the presence of bound VEGFC or VEGFD. Can also form a heterodimer with KDR. Interacts with PTPN14; the interaction is enhanced by stimulation with VEGFC. Interacts with CRK, GRB2, PTK2/FAK1, SHC1, PIK3R1 and PTPN11/SHP-2. Identified in a complex with SRC and ITGB1. In terms of processing, autophosphorylated on tyrosine residues upon ligand binding. Autophosphorylation occurs in trans, i.e. one subunit of the dimeric receptor phosphorylates tyrosine residues on the other subunit. Phosphorylation in response to H(2)O(2) is mediated by a process that requires SRC and PRKCD activity. Phosphorylation at Tyr-1068 is required for autophosphorylation at additional tyrosine residues. Phosphorylation at Tyr-1063 and Tyr-1337 is important for interaction with CRK and subsequent activation of MAPK8. Phosphorylation at Tyr-1230, Tyr-1231 and Tyr-1337 is important for interaction with GRB2 and subsequent activation of the AKT1 and MAPK1/ERK2 and/or MAPK3/ERK1 signaling pathways. In response to endothelial cell adhesion onto collagen, can also be phosphorylated in the absence of FLT4 kinase activity by SRC at Tyr-830, Tyr-833, Tyr-853, Tyr-1063, Tyr-1333, and Tyr-1337. As to expression, detected in endothelial cells (at protein level). Widely expressed. Detected in fetal spleen, lung and brain. Detected in adult liver, muscle, thymus, placenta, lung, testis, ovary, prostate, heart, and kidney.

The protein localises to the cell membrane. It localises to the cytoplasm. It is found in the nucleus. The protein resides in the secreted. It carries out the reaction L-tyrosyl-[protein] + ATP = O-phospho-L-tyrosyl-[protein] + ADP + H(+). Present in an inactive conformation in the absence of bound ligand. Binding of VEGFC or VEGFD leads to dimerization and activation by autophosphorylation on tyrosine residues. Inhibited by MAZ51. Tyrosine-protein kinase that acts as a cell-surface receptor for VEGFC and VEGFD, and plays an essential role in adult lymphangiogenesis and in the development of the vascular network and the cardiovascular system during embryonic development. Promotes proliferation, survival and migration of endothelial cells, and regulates angiogenic sprouting. Signaling by activated FLT4 leads to enhanced production of VEGFC, and to a lesser degree VEGFA, thereby creating a positive feedback loop that enhances FLT4 signaling. Modulates KDR signaling by forming heterodimers. The secreted isoform 3 may function as a decoy receptor for VEGFC and/or VEGFD and play an important role as a negative regulator of VEGFC-mediated lymphangiogenesis and angiogenesis. Binding of vascular growth factors to isoform 1 or isoform 2 leads to the activation of several signaling cascades; isoform 2 seems to be less efficient in signal transduction, because it has a truncated C-terminus and therefore lacks several phosphorylation sites. Mediates activation of the MAPK1/ERK2, MAPK3/ERK1 signaling pathway, of MAPK8 and the JUN signaling pathway, and of the AKT1 signaling pathway. Phosphorylates SHC1. Mediates phosphorylation of PIK3R1, the regulatory subunit of phosphatidylinositol 3-kinase. Promotes phosphorylation of MAPK8 at 'Thr-183' and 'Tyr-185', and of AKT1 at 'Ser-473'. The sequence is that of Vascular endothelial growth factor receptor 3 (FLT4) from Homo sapiens (Human).